A 305-amino-acid chain; its full sequence is Guanine nucleotide-binding protein subunit beta (305 aa).

WD repeat units lie at residues 19-49 (NKLG…LVWD), 61-91 (APSV…VVYD), 104-133 (GHAG…MFWD), 145-176 (GHEM…KLWD), 188-218 (GNTS…RCFD), 231-260 (PSSS…EVWD), and 272-302 (GHEN…RLWS).

The protein belongs to the WD repeat G protein beta family. In terms of assembly, g proteins are composed of 3 units, alpha, beta and gamma. Binding of the beta-gamma subunit complex (git5-git11) to the alpha subunit (gpa2) facilitates interaction with GPCR git3.

Its subcellular location is the cell membrane. The protein localises to the cytoplasm. It is found in the nucleus. Beta subunit of the heterotrimeric guanine nucleotide-binding protein (G protein) involved in glucose-induced cAMP signaling. The beta-gamma subunits (git5-git11) promote binding of the alpha subunit gpa2 to GPCR git3, which senses extracellular glucose, to activate cAMP-PKA signaling and repress sexual development and gluconeogenesis. The polypeptide is Guanine nucleotide-binding protein subunit beta (git5) (Schizosaccharomyces pombe (strain 972 / ATCC 24843) (Fission yeast)).